The primary structure comprises 280 residues: AGNRRPIWIMGHMVNAIGQIDEFVNLGANSIETDVSFDDNANPEYTYHGIPCDCGRNCKKYENFNDFLKGLRSATTPGNSKYQEKLVLVVFDLKTGSLYDNQANDAGKKLAKNLLQHYWNNGNNGGRAYIVLSIPDLNHYPLIKGFKDQLTKDGHPELMDKVGHDFSGNDDIGDVGKAYKKAGITGHIWQSDGITNCLPRGLSRVNAAVANRDSANGFINKVYYWTVDKRSTTRDALDAGVDGIMTNYPDVITDVLNEAAYKKKFRVATYDDNPWVTFKK.

The active site involves His-12. Mg(2+) contacts are provided by Glu-32 and Asp-34. Catalysis depends on His-48, which acts as the Nucleophile. Intrachain disulfides connect Cys-52/Cys-58 and Cys-54/Cys-197. A Mg(2+)-binding site is contributed by Asp-92.

The protein belongs to the arthropod phospholipase D family. Class II subfamily. Mg(2+) serves as cofactor. Expressed by the venom gland.

The protein resides in the secreted. It carries out the reaction an N-(acyl)-sphingosylphosphocholine = an N-(acyl)-sphingosyl-1,3-cyclic phosphate + choline. The catalysed reaction is an N-(acyl)-sphingosylphosphoethanolamine = an N-(acyl)-sphingosyl-1,3-cyclic phosphate + ethanolamine. The enzyme catalyses a 1-acyl-sn-glycero-3-phosphocholine = a 1-acyl-sn-glycero-2,3-cyclic phosphate + choline. It catalyses the reaction a 1-acyl-sn-glycero-3-phosphoethanolamine = a 1-acyl-sn-glycero-2,3-cyclic phosphate + ethanolamine. Functionally, dermonecrotic toxins cleave the phosphodiester linkage between the phosphate and headgroup of certain phospholipids (sphingolipid and lysolipid substrates), forming an alcohol (often choline) and a cyclic phosphate. This toxin acts on sphingomyelin (SM). It may also act on ceramide phosphoethanolamine (CPE), lysophosphatidylcholine (LPC) and lysophosphatidylethanolamine (LPE), but not on lysophosphatidylserine (LPS), and lysophosphatidylglycerol (LPG). It acts by transphosphatidylation, releasing exclusively cyclic phosphate products as second products. Induces dermonecrosis, hemolysis, increased vascular permeability, edema, inflammatory response, and platelet aggregation. The polypeptide is Dermonecrotic toxin LsSicTox-alphaIA1 (Loxosceles similis (Brazilian brown spider)).